Here is a 1259-residue protein sequence, read N- to C-terminus: Trafficking protein particle complex subunit 10 (1259 aa).

Residue Ser-708 is modified to Phosphoserine. Residues 1189-1222 (LSVDKHGDDQPDSSSLKSRGSVHSACSSEHKGLP) form a disordered region.

This sequence belongs to the TRAPPC10 family. As to quaternary structure, specific component of the multisubunit TRAPP II complex, which includes at least TRAPPC1, TRAPPC2, TRAPPC3, TRAPPC4, TRAPPC5, TRAPPC6A/B, TRAPPC9, TRAPPC10 and TRAPPC14. TRAPPC9, TRAPPC10 and TRAPPC14 are specific subunits of the TRAPP II complex. Interacts with TRAPPC14. As to expression, expressed in all tissues examined.

It is found in the golgi apparatus. The protein localises to the cis-Golgi network. Specific subunit of the TRAPP (transport protein particle) II complex, a highly conserved vesicle tethering complex that functions in late Golgi trafficking as a membrane tether. This Homo sapiens (Human) protein is Trafficking protein particle complex subunit 10 (TRAPPC10).